The following is an 82-amino-acid chain: Proline, histidine and glycine-rich protein 1 (82 aa).

The disordered stretch occupies residues 20–82 (HCGPPPGHGP…PGHPPPGPHH (63 aa)).

This is Proline, histidine and glycine-rich protein 1 (PHGR1) from Homo sapiens (Human).